The following is a 330-amino-acid chain: Phosphate acyltransferase (330 aa).

Belongs to the PlsX family. In terms of assembly, homodimer. Probably interacts with PlsY.

It is found in the cytoplasm. It carries out the reaction a fatty acyl-[ACP] + phosphate = an acyl phosphate + holo-[ACP]. It participates in lipid metabolism; phospholipid metabolism. Catalyzes the reversible formation of acyl-phosphate (acyl-PO(4)) from acyl-[acyl-carrier-protein] (acyl-ACP). This enzyme utilizes acyl-ACP as fatty acyl donor, but not acyl-CoA. The protein is Phosphate acyltransferase of Streptococcus pneumoniae serotype 2 (strain D39 / NCTC 7466).